Here is a 61-residue protein sequence, read N- to C-terminus: Small ribosomal subunit protein uS14 (61 aa).

Positions 24, 27, 40, and 43 each coordinate Zn(2+).

The protein belongs to the universal ribosomal protein uS14 family. Zinc-binding uS14 subfamily. Part of the 30S ribosomal subunit. Contacts proteins S3 and S10. Requires Zn(2+) as cofactor.

In terms of biological role, binds 16S rRNA, required for the assembly of 30S particles and may also be responsible for determining the conformation of the 16S rRNA at the A site. This is Small ribosomal subunit protein uS14 from Sulfurimonas denitrificans (strain ATCC 33889 / DSM 1251) (Thiomicrospira denitrificans (strain ATCC 33889 / DSM 1251)).